We begin with the raw amino-acid sequence, 446 residues long: Phosphoglucosamine mutase (446 aa).

Catalysis depends on Ser101, which acts as the Phosphoserine intermediate. The Mg(2+) site is built by Ser101, Asp240, Asp242, and Asp244. The residue at position 101 (Ser101) is a Phosphoserine.

It belongs to the phosphohexose mutase family. Mg(2+) is required as a cofactor. Activated by phosphorylation.

The catalysed reaction is alpha-D-glucosamine 1-phosphate = D-glucosamine 6-phosphate. Its function is as follows. Catalyzes the conversion of glucosamine-6-phosphate to glucosamine-1-phosphate. The sequence is that of Phosphoglucosamine mutase from Coxiella burnetii (strain Dugway 5J108-111).